The primary structure comprises 82 residues: Sulfur carrier protein TusA (82 aa).

Cysteine 19 serves as the catalytic Cysteine persulfide intermediate.

It belongs to the sulfur carrier protein TusA family.

The protein resides in the cytoplasm. Sulfur carrier protein which probably makes part of a sulfur-relay system. The chain is Sulfur carrier protein TusA from Vibrio parahaemolyticus serotype O3:K6 (strain RIMD 2210633).